Here is a 166-residue protein sequence, read N- to C-terminus: Phosphopantetheine adenylyltransferase (166 aa).

S10 contacts substrate. ATP-binding positions include 10-11 (SF) and H18. Positions 42, 79, and 93 each coordinate substrate. ATP contacts are provided by residues 94–96 (GLR), E104, and 129–135 (VRPITAT).

It belongs to the bacterial CoaD family. Homohexamer. It depends on Mg(2+) as a cofactor.

The protein localises to the cytoplasm. It catalyses the reaction (R)-4'-phosphopantetheine + ATP + H(+) = 3'-dephospho-CoA + diphosphate. Its pathway is cofactor biosynthesis; coenzyme A biosynthesis; CoA from (R)-pantothenate: step 4/5. Its function is as follows. Reversibly transfers an adenylyl group from ATP to 4'-phosphopantetheine, yielding dephospho-CoA (dPCoA) and pyrophosphate. The chain is Phosphopantetheine adenylyltransferase from Methylobacterium sp. (strain 4-46).